Here is a 133-residue protein sequence, read N- to C-terminus: MNNKLIYRSVRFATHNSQLLLPPLVLYRRILRQHKLLPGPQREMGDQYVRNEFKLHKDIDNPLHIVGFLASWQDYLHMISNGKWKDATLSSETLEKLSPEQTVQLYELMKETQKLHQDNEIESSKDVKRNNKD.

Residues Met1–Phe12 constitute a mitochondrion transit peptide.

This sequence belongs to the complex I LYR family. SDHAF3 subfamily. As to quaternary structure, interacts with SDH2 within an SDH1-SDH2 subcomplex.

Its subcellular location is the mitochondrion. It is found in the mitochondrion intermembrane space. The protein resides in the mitochondrion matrix. Its function is as follows. Plays an essential role in the assembly of succinate dehydrogenase (SDH), an enzyme complex (also referred to as respiratory complex II) that is a component of both the tricarboxylic acid (TCA) cycle and the mitochondrial electron transport chain, and which couples the oxidation of succinate to fumarate with the reduction of ubiquinone (coenzyme Q) to ubiquinol. Promotes maturation of the iron-sulfur protein subunit SDH2 of the SDH catalytic dimer, protecting it from the deleterious effects of oxidants. Acts together with SDHAF1 (SDH6). This Saccharomyces cerevisiae (strain ATCC 204508 / S288c) (Baker's yeast) protein is Succinate dehydrogenase assembly factor 3, mitochondrial.